Here is a 1827-residue protein sequence, read N- to C-terminus: Phenolphthiocerol/phthiocerol polyketide synthase subunit C (1827 aa).

The Ketosynthase family 3 (KS3) domain maps to 35–461; sequence CEPVAVVGIG…GTNAHVVVEQ (427 aa). Active-site for beta-ketoacyl synthase activity residues include C207, H342, and H383. Positions 566-876 are acyltransferase; the sequence is VFVYSGQGSQ…LAAVGVAASE (311 aa). Residue S654 is the For malonyltransferase activity of the active site. The tract at residues 910 to 1037 is N-terminal hotdog fold; that stretch reads HPLLGAHIEM…AKVEQSPREC (128 aa). The interval 910 to 1076 is dehydratase; it reads HPLLGAHIEM…QHHGPAFAAL (167 aa). Residues 910–1198 enclose the PKS/mFAS DH domain; the sequence is HPLLGAHIEM…LRRVERRAVP (289 aa). Catalysis depends on H942, which acts as the Proton acceptor; for dehydratase activity. A C-terminal hotdog fold region spans residues 1050-1198; the sequence is GTTVSPADFY…LRRVERRAVP (149 aa). D1111 (proton donor; for dehydratase activity) is an active-site residue. The interval 1439 to 1617 is beta-ketoacyl reductase; sequence ASYVVTGGLG…VINWGPWSEV (179 aa). 1440–1485 is a binding site for NADP(+); that stretch reads SYVVTGGLGGLGLVVARWLVDRGAGRVVLGGRSDPTDEQCNVLAEL. The 80-residue stretch at 1706–1785 folds into the Carrier domain; it reads RAVTERMCAR…DLTADLMRQL (80 aa). S1745 bears the O-(pantetheine 4'-phosphoryl)serine mark. Over residues 1807 to 1820 the composition is skewed to basic residues; sequence RAAARHGAAMRRRP. Positions 1807 to 1827 are disordered; that stretch reads RAAARHGAAMRRRPKPEVQGG.

NADP(+) serves as cofactor. It depends on pantetheine 4'-phosphate as a cofactor.

It catalyses the reaction icosanoyl-[(phenol)carboxyphthiodiolenone synthase] + 2 (S)-methylmalonyl-CoA + 3 malonyl-CoA + 5 NADPH + 10 H(+) = C32-carboxyphthiodiolenone-[(phenol)carboxyphthiodiolenone synthase] + 5 CO2 + 5 NADP(+) + 5 CoA + 2 H2O. The catalysed reaction is docosanoyl-[(phenol)carboxyphthiodiolenone synthase] + 2 (S)-methylmalonyl-CoA + 3 malonyl-CoA + 5 NADPH + 10 H(+) = C34-carboxyphthiodiolenone-[(phenol)carboxyphthiodiolenone synthase] + 5 CO2 + 5 NADP(+) + 5 CoA + 2 H2O. It carries out the reaction 17-(4-hydroxyphenyl)heptadecanoyl-[(phenol)carboxyphthiodiolenone synthase] + 2 (S)-methylmalonyl-CoA + 3 malonyl-CoA + 5 NADPH + 10 H(+) = C35-(phenol)carboxyphthiodiolenone-[(phenol)carboxyphthiodiolenone synthase] + 5 CO2 + 5 NADP(+) + 5 CoA + 2 H2O. The enzyme catalyses 19-(4-hydroxyphenyl)nonadecanoyl-[(phenol)carboxyphthiodiolenone synthase] + 2 (S)-methylmalonyl-CoA + 3 malonyl-CoA + 5 NADPH + 10 H(+) = C37-(phenol)carboxyphthiodiolenone-[(phenol)carboxyphthiodiolenone synthase] + 5 CO2 + 5 NADP(+) + 5 CoA + 2 H2O. It participates in lipid metabolism; fatty acid biosynthesis. Part of the PpsABCDE complex involved in the biosynthesis of the lipid core common to phthiocerols and phenolphthiocerols by successive additions of malonyl-CoA or methylmalonyl-CoA extender units. PpsA can accept as substrate the activated forms of either icosanoyl (C20), docosanoyl (C22) or lignoceroyl (C24) groups from FadD26, or a (4-hydroxyphenyl)-C17 or (4-hydroxyphenyl)-C19 fatty acyl from FadD29. PpsA initiates the biosynthesis and extends its substrate using a malonyl-CoA extender unit. The PpsB and PpsC proteins add the second and third malonyl-CoA extender units. PpsD adds an (R)-methylmalonyl unit and PpsE adds a second (R)-methylmalonyl unit. The incorporation of the methylmalonyl units results in formation of two branched methyl groups in the elongated product. The protein is Phenolphthiocerol/phthiocerol polyketide synthase subunit C (ppsD) of Mycobacterium tuberculosis (strain CDC 1551 / Oshkosh).